A 176-amino-acid chain; its full sequence is ATP-dependent protease subunit HslV (176 aa).

Threonine 4 is a catalytic residue. Positions 158, 161, and 164 each coordinate Na(+).

This sequence belongs to the peptidase T1B family. HslV subfamily. As to quaternary structure, a double ring-shaped homohexamer of HslV is capped on each side by a ring-shaped HslU homohexamer. The assembly of the HslU/HslV complex is dependent on binding of ATP.

It localises to the cytoplasm. The catalysed reaction is ATP-dependent cleavage of peptide bonds with broad specificity.. Its activity is regulated as follows. Allosterically activated by HslU binding. Functionally, protease subunit of a proteasome-like degradation complex believed to be a general protein degrading machinery. The chain is ATP-dependent protease subunit HslV from Rhizobium meliloti (strain 1021) (Ensifer meliloti).